We begin with the raw amino-acid sequence, 329 residues long: Prostaglandin reductase 1 (329 aa).

Position 18 is a phosphothreonine (threonine 18). Serine 20 carries the post-translational modification Phosphoserine. NADP(+) is bound by residues 152–155 (GAVG), lysine 178, tyrosine 193, asparagine 217, 239–245 (CGAISQY), 270–272 (FIV), and asparagine 321. At lysine 178 the chain carries N6-(2-hydroxyisobutyryl)lysine; alternate. The residue at position 178 (lysine 178) is an N6-acetyllysine; alternate.

The protein belongs to the NADP-dependent oxidoreductase L4BD family. As to quaternary structure, monomer or homodimer.

Its subcellular location is the cytoplasm. It carries out the reaction 13,14-dihydro-15-oxo-prostaglandin E1 + NADP(+) = 15-oxoprostaglandin E1 + NADPH + H(+). The catalysed reaction is 13,14-dihydro-15-oxo-prostaglandin E2 + NADP(+) = 15-oxoprostaglandin E2 + NADPH + H(+). The enzyme catalyses 13,14-dihydro-15-oxo-prostaglandin F1alpha + NADP(+) = 15-oxoprostaglandin F1alpha + NADPH + H(+). It catalyses the reaction 13,14-dihydro-15-oxo-PGF2alpha + NADP(+) = 15-oxoprostaglandin F2alpha + NADPH + H(+). It carries out the reaction leukotriene B4 + NADP(+) = 12-oxo-leukotriene B4 + NADPH + H(+). The catalysed reaction is 20-hydroxy-leukotriene B4 + NADP(+) = 12-oxo-20-hydroxy-leukotriene B4 + NADPH + H(+). The enzyme catalyses 6-trans-leukotriene B4 + NADP(+) = 12-oxo-(5S)-hydroxy-(6E,8E,10E,14Z)-eicosatetraenoate + NADPH + H(+). It catalyses the reaction (5S,12S)-dihydroxy-(6E,10E,12E,14Z)-eicosatetraenoate + NADP(+) = 12-oxo-(5S)-hydroxy-(6E,8E,10E,14Z)-eicosatetraenoate + NADPH + H(+). It carries out the reaction an n-alkanal + NADP(+) = an alk-2-enal + NADPH + H(+). The catalysed reaction is hexanal + NADP(+) = (E)-hex-2-enal + NADPH + H(+). The enzyme catalyses octanal + NADP(+) = (2E)-octenal + NADPH + H(+). It catalyses the reaction decanal + NADP(+) = (2E)-decenal + NADPH + H(+). It carries out the reaction dodecanal + NADP(+) = (2E)-dodecenal + NADPH + H(+). The catalysed reaction is 4-hydroxynonanal + NADP(+) = (E)-4-hydroxynon-2-enal + NADPH + H(+). The enzyme catalyses pentan-2-one + NADP(+) = (E)-pent-3-en-2-one + NADPH + H(+). It catalyses the reaction nonan-2-one + NADP(+) = (3E)-nonen-2-one + NADPH + H(+). Its function is as follows. NAD(P)H-dependent oxidoreductase involved in metabolic inactivation of pro- and anti-inflammatory eicosanoids: prostaglandins (PG), leukotrienes (LT) and lipoxins (LX). Catalyzes with high efficiency the reduction of the 13,14 double bond of 15-oxoPGs, including 15-oxo-PGE1, 15-oxo-PGE2, 15-oxo-PGF1-alpha and 15-oxo-PGF2-alpha. Catalyzes with lower efficiency the oxidation of the hydroxyl group at C12 of LTB4 and its derivatives, converting them into biologically less active 12-oxo-LTB4 metabolites. Reduces 15-oxo-LXA4 to 13,14 dihydro-15-oxo-LXA4, enhancing neutrophil recruitment at the inflammatory site. Plays a role in metabolic detoxification of alkenals and ketones. Reduces alpha,beta-unsaturated alkenals and ketones, particularly those with medium-chain length, showing highest affinity toward (2E)-decenal and (3E)-3-nonen-2-one. Inactivates 4-hydroxy-2-nonenal, a cytotoxic lipid constituent of oxidized low-density lipoprotein particles. The sequence is that of Prostaglandin reductase 1 (Ptgr1) from Rattus norvegicus (Rat).